Reading from the N-terminus, the 181-residue chain is CDP-archaeol synthase (181 aa).

A run of 5 helical transmembrane segments spans residues 7 to 27 (VVVA…AVLA), 55 to 75 (AVGT…RPAA), 80 to 100 (GVVL…GAMV), 128 to 148 (FVVV…GDTF), and 150 to 170 (LPVL…TNGI).

This sequence belongs to the CDP-archaeol synthase family. Mg(2+) serves as cofactor.

The protein resides in the cell membrane. It carries out the reaction 2,3-bis-O-(geranylgeranyl)-sn-glycerol 1-phosphate + CTP + H(+) = CDP-2,3-bis-O-(geranylgeranyl)-sn-glycerol + diphosphate. Its pathway is membrane lipid metabolism; glycerophospholipid metabolism. Functionally, catalyzes the formation of CDP-2,3-bis-(O-geranylgeranyl)-sn-glycerol (CDP-archaeol) from 2,3-bis-(O-geranylgeranyl)-sn-glycerol 1-phosphate (DGGGP) and CTP. This reaction is the third ether-bond-formation step in the biosynthesis of archaeal membrane lipids. In Halobacterium salinarum (strain ATCC 29341 / DSM 671 / R1), this protein is CDP-archaeol synthase.